Reading from the N-terminus, the 363-residue chain is NADH-quinone oxidoreductase subunit H (363 aa).

Helical transmembrane passes span 62-82 (GPMY…KLLF), 96-116 (FVIA…VVPF), 127-147 (VGLL…ILAG), 163-183 (AAQV…VMIA), 202-222 (FFDW…VSGV), 238-257 (EIVA…LFFL), 264-286 (ILVS…QGWV), 299-319 (KGGW…YIWF), and 339-359 (FIPL…YGVI).

Belongs to the complex I subunit 1 family. NDH-1 is composed of 14 different subunits. Subunits NuoA, H, J, K, L, M, N constitute the membrane sector of the complex.

The protein localises to the cell inner membrane. The enzyme catalyses a quinone + NADH + 5 H(+)(in) = a quinol + NAD(+) + 4 H(+)(out). In terms of biological role, NDH-1 shuttles electrons from NADH, via FMN and iron-sulfur (Fe-S) centers, to quinones in the respiratory chain. The immediate electron acceptor for the enzyme in this species is believed to be ubiquinone. Couples the redox reaction to proton translocation (for every two electrons transferred, four hydrogen ions are translocated across the cytoplasmic membrane), and thus conserves the redox energy in a proton gradient. This subunit may bind ubiquinone. This chain is NADH-quinone oxidoreductase subunit H, found in Xanthomonas axonopodis pv. citri (strain 306).